A 1037-amino-acid chain; its full sequence is Caspase recruitment domain-containing protein 6 (1037 aa).

The residue at position 2 (Ala2) is an N-acetylalanine. The CARD domain maps to 3 to 94; sequence TESTPSEIIE…QSAAICGLRH (92 aa). The residue at position 154 (Ser154) is a Phosphoserine. Disordered stretches follow at residues 235 to 270, 669 to 704, and 887 to 1037; these read DPEH…TSLS, VSSG…PIQE, and RTSH…GGKH. Residues 242 to 261 are compositionally biased toward acidic residues; that stretch reads DGEEDFENSETTEFSGEEPS. Positions 690–699 are enriched in low complexity; the sequence is LKSSSKSQAL. 3 stretches are compositionally biased toward polar residues: residues 911 to 928, 938 to 954, and 963 to 984; these read ASQQ…SNPA, KSSQ…TVKH, and VPSQ…QTKP. Ser985 carries the post-translational modification Phosphoserine. Over residues 994–1012 the composition is skewed to pro residues; that stretch reads PSQPWPPQSKPSQPRPPQP. A compositionally biased stretch (basic residues) spans 1023 to 1037; it reads KAHHSKAGQKRGGKH.

Functionally, may be involved in apoptosis. This is Caspase recruitment domain-containing protein 6 (CARD6) from Homo sapiens (Human).